Consider the following 672-residue polypeptide: Zinc finger protein 271 (672 aa).

Residues 1–29 (MEIQFNYESQEHHLLSDGENKTKIGKPAS) form a disordered region. Over residues 9–22 (SQEHHLLSDGENKT) the composition is skewed to basic and acidic residues. The segment at 80 to 102 (HNCDEYGQSFVWNTGLFRHRKTH) adopts a C2H2-type 1; degenerate zinc-finger fold. C2H2-type zinc fingers lie at residues 107–129 (YECDKCGKAFSVSSALVLHQRIH), 135–157 (YSCNWCIKSFSRSSDLIKHQRVH), 163–185 (YKCDECGKAFSQSSDLIIHQRIH), 191–213 (YQCSHCSKSFSQRSDLVKHQRIH), 219–241 (YTCNQCNKHFSQSSDVIKHQRIH), 247–269 (YKCDVCAKAFSQSSDLILHQRIH), 275–297 (YPCNQCSKSFSQNSDLIKHRRIH), 303–325 (YKCNECGKAFNQSSVLILHQRIH), 331–353 (YPCDQCSKTFSRLSDLINHQRIH), 359–381 (YPCNQCNKMFSRRSDLVKHHRIH), 387–409 (YECDECGKTFSQSSNLILHQRIH), 415–437 (YPCSDCTKSFSRRSDLVKHQRIH), 443–465 (YACNQCDKSFSQSSDLTKHQRVH), 471–493 (YHCNSCEKAFSQSSDLILHQRIH), 499–521 (YLCTQCSKSFSQNSDLIKHQRIH), 527–549 (YKCSECRKAFSQCSALTLHQRIH), 555–577 (NPCNECGKSFSRHSDLINHQKIH), 583–605 (YKCDACGKAFSTCTDLIEHQKIH), and 611–633 (YRCVQCSRSFSQLSELTIHEEVH).

It belongs to the krueppel C2H2-type zinc-finger protein family.

Its subcellular location is the nucleus. Functionally, may be involved in transcriptional regulation. This is Zinc finger protein 271 (ZNF271) from Pongo abelii (Sumatran orangutan).